Reading from the N-terminus, the 661-residue chain is Bifunctional xylanase/xylan deacetylase (661 aa).

The first 27 residues, 1-27, serve as a signal peptide directing secretion; it reads MKLPTLGKCVVRTLMGAVALGAISVNA. One can recognise a GH11 domain in the interval 29–226; that stretch reads TLSSNSTGTN…SRGSSDITVS (198 aa). Glutamate 116 serves as the catalytic Nucleophile; for endoxylanase activity. Catalysis depends on glutamate 213, which acts as the Proton donor; for endoxylanase activity. The interval 220-259 is disordered; that stretch reads SSDITVSEGTSGGGTSSVGGASSSVNSSTGGGSSGGITVR. The span at 237–247 shows a compositional bias: low complexity; the sequence is VGGASSSVNSS. The segment at 394–577 is polysaccharide deacetylase; that stretch reads SNCSGYVGIT…AKGLCPGRID (184 aa). In terms of domain architecture, NodB homology spans 398 to 574; that stretch reads GYVGITFDDG…NLRAKGLCPG (177 aa). The interval 578–610 is disordered; sequence PNTGRAVAPSSSGGSSSVALSSSSRSSSSAGGN. Low complexity predominate over residues 581 to 608; sequence GRAVAPSSSGGSSSVALSSSSRSSSSAG. The CBM10 domain maps to 616–645; that stretch reads QCNWWGTFYPLCQTQTSGWGWENSRSCIST.

In the N-terminal section; belongs to the glycosyl hydrolase 11 (cellulase G) family.

It localises to the secreted. It carries out the reaction Endohydrolysis of (1-&gt;4)-beta-D-xylosidic linkages in xylans.. It catalyses the reaction Deacetylation of xylans and xylo-oligosaccharides.. It participates in glycan degradation; xylan degradation. Endo-acting xylanase which specifically cleaves internal linkages on the xylan backbone, releasing xylooligosaccharides. Is able to hydrolyze oat spelt xylan and the arabinoxylans from wheat and rye, releasing xylobiose as the major product. Also likely catalyzes, via its C-terminal domain, the removal of acetyl groups from acetylated xylan. Thus, has the capability of hydrolyzing acetylated xylan. Does not attack mannan, galactan, arabinan or any cellulosic substrates. The sequence is that of Bifunctional xylanase/xylan deacetylase (xyn11A) from Cellvibrio japonicus (Pseudomonas fluorescens subsp. cellulosa).